Reading from the N-terminus, the 60-residue chain is Small ribosomal subunit protein eS31 (60 aa).

C32, C35, C50, and C53 together coordinate Zn(2+). The segment at 32 to 53 adopts a C4-type zinc-finger fold; that stretch reads CPRCGAGVFMGEHKDRFSCGKC.

The protein belongs to the eukaryotic ribosomal protein eS31 family. In terms of assembly, part of the 30S ribosomal subunit. The cofactor is Zn(2+).

The polypeptide is Small ribosomal subunit protein eS31 (Methanocorpusculum labreanum (strain ATCC 43576 / DSM 4855 / Z)).